We begin with the raw amino-acid sequence, 166 residues long: uncharacterized protein (166 aa).

To M.jannaschii MJ0992.

This is an uncharacterized protein from Methanocaldococcus jannaschii (strain ATCC 43067 / DSM 2661 / JAL-1 / JCM 10045 / NBRC 100440) (Methanococcus jannaschii).